The primary structure comprises 78 residues: Protein SlyX homolog (78 aa).

Belongs to the SlyX family.

This chain is Protein SlyX homolog, found in Xanthomonas axonopodis pv. citri (strain 306).